Here is a 146-residue protein sequence, read N- to C-terminus: MSINIDIKKITDLLNSSILFPDDVQELLREKYIVLERKSNGTPTVAHIYKTMARFDNKSIYRIAKFLFMNRPDVIKLLFLKDVEPLLPDKSINISINNTEYPQLEGPIGTKIALLELFNAFRTGRSEPIPYYYLPLRKDINNIVTK.

The protein belongs to the orthopoxvirus OPG114 family. As to quaternary structure, part of a complex composed of the kinase OPG054, OPG092, OPG100, OPG114, OPG115, OPG142 and OPG157.

It is found in the virion. Its function is as follows. Late protein which is part of a large complex required for early virion morphogenesis. This complex participates in the formation of virosomes and the incorporation of virosomal contents into nascent immature virions. In Vaccinia virus (strain Western Reserve) (VACV), this protein is Core protein OPG114 (OPG114).